The following is a 379-amino-acid chain: Alanine racemase (379 aa).

The Proton acceptor; specific for D-alanine role is filled by K37. N6-(pyridoxal phosphate)lysine is present on K37. R137 is a binding site for substrate. The active-site Proton acceptor; specific for L-alanine is Y269. M317 contacts substrate.

Belongs to the alanine racemase family. Pyridoxal 5'-phosphate serves as cofactor.

It carries out the reaction L-alanine = D-alanine. It participates in amino-acid biosynthesis; D-alanine biosynthesis; D-alanine from L-alanine: step 1/1. Catalyzes the interconversion of L-alanine and D-alanine. May also act on other amino acids. The polypeptide is Alanine racemase (alr) (Geobacter sp. (strain M21)).